Here is a 657-residue protein sequence, read N- to C-terminus: Probable potassium transport system protein Kup (657 aa).

12 consecutive transmembrane segments (helical) span residues 15-35 (SFLIALGVVYGDIGTSPLYVM), 48-68 (ITPDFILGVLSLIFWTMTLLT), 100-120 (WLIIPAMVGGSALLADGMLTP), 147-167 (IIIIIVLVILSFLFFIQHFGT), 173-193 (IFGPVMFIWFAFLAILGIVNL), 219-239 (LGFFILGGVFLSTTGAEALYS), 251-271 (LTWPLVKICLLLNYFGQAAWI), 292-312 (MMPSWLLLFGVLISTLAAIIA), 348-368 (IYMPAINRILWIACIAIVLYF), 378-398 (YGLSITVTMLMTSILLFNYLL), 403-423 (PLPIALIILVFFSSLEFSFLI), and 431-451 (KGGFVSVLIALCILSIMYIWI).

It belongs to the HAK/KUP transporter (TC 2.A.72) family.

Its subcellular location is the cell membrane. It carries out the reaction K(+)(in) + H(+)(in) = K(+)(out) + H(+)(out). Functionally, transport of potassium into the cell. Likely operates as a K(+):H(+) symporter. The chain is Probable potassium transport system protein Kup from Clostridium perfringens (strain SM101 / Type A).